Consider the following 248-residue polypeptide: Pyridoxine 5'-phosphate synthase (248 aa).

Asparagine 12 contributes to the 3-amino-2-oxopropyl phosphate binding site. 14–15 lines the 1-deoxy-D-xylulose 5-phosphate pocket; the sequence is DH. Arginine 23 is a binding site for 3-amino-2-oxopropyl phosphate. Histidine 48 serves as the catalytic Proton acceptor. Positions 50 and 55 each coordinate 1-deoxy-D-xylulose 5-phosphate. Glutamate 75 serves as the catalytic Proton acceptor. Threonine 105 contributes to the 1-deoxy-D-xylulose 5-phosphate binding site. The active-site Proton donor is histidine 199. Residues glycine 200 and 221–222 each bind 3-amino-2-oxopropyl phosphate; that span reads GH.

This sequence belongs to the PNP synthase family. As to quaternary structure, homooctamer; tetramer of dimers.

It is found in the cytoplasm. The catalysed reaction is 3-amino-2-oxopropyl phosphate + 1-deoxy-D-xylulose 5-phosphate = pyridoxine 5'-phosphate + phosphate + 2 H2O + H(+). It functions in the pathway cofactor biosynthesis; pyridoxine 5'-phosphate biosynthesis; pyridoxine 5'-phosphate from D-erythrose 4-phosphate: step 5/5. Its function is as follows. Catalyzes the complicated ring closure reaction between the two acyclic compounds 1-deoxy-D-xylulose-5-phosphate (DXP) and 3-amino-2-oxopropyl phosphate (1-amino-acetone-3-phosphate or AAP) to form pyridoxine 5'-phosphate (PNP) and inorganic phosphate. The polypeptide is Pyridoxine 5'-phosphate synthase (Jannaschia sp. (strain CCS1)).